The primary structure comprises 431 residues: O-phosphoseryl-tRNA(Sec) selenium transferase (431 aa).

The interval 1–36 (MRGLIPDHMLERGRTVLDSYREPVERLLSERRMPEE) is tetramerization. Residue arginine 67 participates in pyridoxal 5'-phosphate binding. Residues 88 to 98 (GRSGTLVDPQP) form a phosphate loop (P-loop) region. Arginine 89, serine 90, and glutamine 97 together coordinate substrate. At lysine 269 the chain carries N6-(pyridoxal phosphate)lysine. Substrate is bound at residue arginine 298.

It belongs to the SepSecS family. Homotetramer. Pyridoxal 5'-phosphate serves as cofactor.

The catalysed reaction is O-phospho-L-seryl-tRNA(Sec) + selenophosphate + H2O = L-selenocysteinyl-tRNA(Sec) + 2 phosphate. It functions in the pathway aminoacyl-tRNA biosynthesis; selenocysteinyl-tRNA(Sec) biosynthesis; selenocysteinyl-tRNA(Sec) from L-seryl-tRNA(Sec) (archaeal/eukaryal route): step 2/2. Converts O-phosphoseryl-tRNA(Sec) to selenocysteinyl-tRNA(Sec) required for selenoprotein biosynthesis. This Methanopyrus kandleri (strain AV19 / DSM 6324 / JCM 9639 / NBRC 100938) protein is O-phosphoseryl-tRNA(Sec) selenium transferase (spcS).